Consider the following 111-residue polypeptide: MLISVLKSKISYATVTGKDLFYVGSITIDSEIMKQANIIENEKVQVVNLNNGERLETYVIKGEPNSKTIALNGPAARRCEIGDQLFIISYTQVDPTRENIKPKLVDLKTGD.

Catalysis depends on serine 25, which acts as the Schiff-base intermediate with substrate; via pyruvic acid. At serine 25 the chain carries Pyruvic acid (Ser). Threonine 57 is a substrate binding site. The active-site Proton donor is tyrosine 58. 73–75 (GPA) lines the substrate pocket.

Belongs to the PanD family. As to quaternary structure, heterooctamer of four alpha and four beta subunits. Pyruvate serves as cofactor. In terms of processing, is synthesized initially as an inactive proenzyme, which is activated by self-cleavage at a specific serine bond to produce a beta-subunit with a hydroxyl group at its C-terminus and an alpha-subunit with a pyruvoyl group at its N-terminus.

It is found in the cytoplasm. The catalysed reaction is L-aspartate + H(+) = beta-alanine + CO2. Its pathway is cofactor biosynthesis; (R)-pantothenate biosynthesis; beta-alanine from L-aspartate: step 1/1. Functionally, catalyzes the pyruvoyl-dependent decarboxylation of aspartate to produce beta-alanine. The polypeptide is Aspartate 1-decarboxylase (Francisella tularensis subsp. tularensis (strain FSC 198)).